Consider the following 432-residue polypeptide: CLOCK-interacting pacemaker (432 aa).

Disordered stretches follow at residues 71 to 98 (ADSD…SEDM) and 194 to 315 (SYTK…SSPL). Position 246 is a phosphoserine (S246). Residues 272-283 (SPQTLQPVSSSH) are compositionally biased toward polar residues. Residues 364–395 (EITLKTKELIRQNQATQAELDQLKEQTQMFIE) adopt a coiled-coil conformation. The tract at residues 408 to 432 (LQASLTSGSSHSGSDLDTLSDHPDV) is disordered. Residues 411-424 (SLTSGSSHSGSDLD) are compositionally biased toward low complexity.

As to quaternary structure, interacts with CLOCK. Forms a ternary complex with the CLOCK-BMAL1 heterodimer. Interacts with CAD and HSPA5. Expressed in the heart, kidney and liver and shows a circadian oscillation in these tissues with a peak at circadian time 14 hours (at protein level). Expressed in the brain, including the suprachiasmatic nucleus (SCN) of the brain, and in multiple peripheral tissues such as heart, liver and kidney. Exhibits a circadian oscillation in the peripheral tissues with a peak at circadian time 14 hours.

It localises to the nucleus. The protein localises to the cytoplasm. Its subcellular location is the cytosol. Its function is as follows. Transcriptional repressor which may act as a negative-feedback regulator of CLOCK-BMAL1 transcriptional activity in the circadian-clock mechanism. May stimulate BMAL1-dependent phosphorylation of CLOCK. However, the physiological relevance of these observations is unsure, since experiments in knockout mice showed that CIPC is not critially required for basic circadian clock. The polypeptide is CLOCK-interacting pacemaker (Cipc) (Mus musculus (Mouse)).